Here is a 335-residue protein sequence, read N- to C-terminus: MTEIYDFDKSAWDIKGSIAPIQPTTYSDGRLVPQVRVIDPGLGDRKDECFMYMFLLGVVEDSDPLGPPIGRAFGSLPLGVGRSTAKPEKLLKEATELDIVVRRTAGLNEKLVFYNNTPLTLLTPWRKVLTTGSVFNANQVCSAVNLIPLDTPQRFRVVYMSITRLSDNGYYTVPRRMLEFRSVNAVAFNLLVTLRIDKAIGPGKIIDNTEQLPEATFMVHIGNFRRKKSEVYSADYCKMKIEKMGLVFALGGIGGTSLHIRSTGKMSKTLHAQLGFKKTLCYPLMDINEDLNRLLWRSRCKIVRIQAVLQPSVPQEFRIYDDVIINDDQGLFKVL.

The protein belongs to the morbillivirus/respirovirus/rubulavirus M protein family. As to quaternary structure, homodimer. Dimerization is critical for virion formation. Interacts with host ANP32B.

It localises to the virion. Its subcellular location is the host cell membrane. In terms of biological role, the M protein has a crucial role in virus assembly and interacts with the RNP complex as well as with the viral membrane. Associates with phosphatidylserine (PS) and phosphatidylinositol 4,5-bisphosphate (PIP2) at the plasma membrane. Interaction with PIP2 triggers matrix protein lattice polymerization. Matrix proteins induce host membrane deformation and curvature necessary for virion assembly/budding. In Measles virus (strain Edmonston) (MeV), this protein is Matrix protein (M).